The following is a 115-amino-acid chain: NTF2-related export protein 1 (115 aa).

The region spanning 7-115 is the NTF2 domain; that stretch reads YAQEFVQRYY…LVLRSSTNFL (109 aa).

It localises to the nucleus. Its function is as follows. Stimulator of protein export for NES-containing proteins. Also plays a role in mRNA nuclear export. This is NTF2-related export protein 1 (nxt1) from Schizosaccharomyces pombe (strain 972 / ATCC 24843) (Fission yeast).